A 91-amino-acid polypeptide reads, in one-letter code: Large ribosomal subunit protein bL27 (91 aa).

The interval 1 to 20 is disordered; that stretch reads MAHKKGVGSSKNGRDSNPKY.

Belongs to the bacterial ribosomal protein bL27 family.

In Deinococcus geothermalis (strain DSM 11300 / CIP 105573 / AG-3a), this protein is Large ribosomal subunit protein bL27.